The sequence spans 477 residues: Acylamidase (477 aa).

Residues lysine 82 and serine 157 each act as charge relay system in the active site. The active-site Acyl-ester intermediate is the serine 181.

It belongs to the amidase family.

The catalysed reaction is a monocarboxylic acid amide + H2O = a monocarboxylate + NH4(+). It carries out the reaction an anilide + H2O = aniline + a carboxylate + H(+). It catalyses the reaction an N-acyl-L-amino acid + H2O = an L-alpha-amino acid + a carboxylate. The enzyme catalyses an N-acetyl-L-cysteine-S-conjugate + H2O = an S-substituted L-cysteine + acetate. Amidase activity is completely suppressed by inhibitors of serine proteases (phenylmethylsulfonyl fluoride and diisopropyl fluorophosphate), partially inhibited by copper and mercury ions, but is not affected by inhibitors of aliphatic amidases (acetaldehyde and nitrophenyl disulfides) or by EDTA. Functionally, amidase with broad substrate specificity, catalyzing the hydrolysis of a wide range of N-substituted amides, and, to a lesser extent, the hydrolysis of non-substituted amides. Acid para-nitroanilides (4'-nitroacetanilide, Gly-pNA, Ala-pNA, Leu-pNA) are the best substrates for this enzyme. N-substituted acrylamides (isopropyl acrylamide, N,N-dimethyl-aminopropyl acrylamide, and methylene-bis-acrylamide), N-acetyl derivatives of glycine, alanine and leucine, and aliphatic amides (acetamide, acrylamide, isobutyramide, n-butyramide, and valeramide) can also be used as substrates but with less efficiency. The sequence is that of Acylamidase from Rhodococcus erythropolis (Arthrobacter picolinophilus).